A 172-amino-acid polypeptide reads, in one-letter code: Small ribosomal subunit protein uS5 (172 aa).

Residues 17 to 80 (LREKMISVNR…EQARRNMFKV (64 aa)) enclose the S5 DRBM domain.

Belongs to the universal ribosomal protein uS5 family. In terms of assembly, part of the 30S ribosomal subunit. Contacts proteins S4 and S8.

With S4 and S12 plays an important role in translational accuracy. Functionally, located at the back of the 30S subunit body where it stabilizes the conformation of the head with respect to the body. The sequence is that of Small ribosomal subunit protein uS5 from Paraburkholderia xenovorans (strain LB400).